Consider the following 234-residue polypeptide: Phosphoglycolate phosphatase (234 aa).

Asp-8 functions as the Nucleophile in the catalytic mechanism. Asp-8 and Asp-10 together coordinate Mg(2+). Residue Lys-155 participates in substrate binding. Asp-178 and Asp-182 together coordinate Mg(2+).

It belongs to the archaeal SPP-like hydrolase family. Requires Mg(2+) as cofactor.

It carries out the reaction 2-phosphoglycolate + H2O = glycolate + phosphate. Its function is as follows. Catalyzes the dephosphorylation of 2-phosphoglycolate. The polypeptide is Phosphoglycolate phosphatase (Thermococcus sibiricus (strain DSM 12597 / MM 739)).